The sequence spans 190 residues: Elongation factor P 2 (190 aa).

Belongs to the elongation factor P family.

The protein resides in the cytoplasm. Its pathway is protein biosynthesis; polypeptide chain elongation. Its function is as follows. Involved in peptide bond synthesis. Stimulates efficient translation and peptide-bond synthesis on native or reconstituted 70S ribosomes in vitro. Probably functions indirectly by altering the affinity of the ribosome for aminoacyl-tRNA, thus increasing their reactivity as acceptors for peptidyl transferase. This Chlamydia muridarum (strain MoPn / Nigg) protein is Elongation factor P 2 (efp2).